We begin with the raw amino-acid sequence, 345 residues long: N-acetyl-gamma-glutamyl-phosphate reductase (345 aa).

Cys-149 is a catalytic residue.

Belongs to the NAGSA dehydrogenase family. Type 1 subfamily.

The protein resides in the cytoplasm. The enzyme catalyses N-acetyl-L-glutamate 5-semialdehyde + phosphate + NADP(+) = N-acetyl-L-glutamyl 5-phosphate + NADPH + H(+). It participates in amino-acid biosynthesis; L-arginine biosynthesis; N(2)-acetyl-L-ornithine from L-glutamate: step 3/4. In terms of biological role, catalyzes the NADPH-dependent reduction of N-acetyl-5-glutamyl phosphate to yield N-acetyl-L-glutamate 5-semialdehyde. In Herminiimonas arsenicoxydans, this protein is N-acetyl-gamma-glutamyl-phosphate reductase.